Here is a 252-residue protein sequence, read N- to C-terminus: Neurexophilin-3 (252 aa).

A signal peptide spans 1–22; it reads MQLTRCCFVFLVQGSLYLVICG. Residues 23 to 75 are II; it reads QDDGPPGSEDPERDDHEGQPRPRVPRKRGHISPKSRPMANSTLLGLLAPPGEA. Residues 27-58 are disordered; that stretch reads PPGSEDPERDDHEGQPRPRVPRKRGHISPKSR. A compositionally biased stretch (basic residues) spans 45–55; the sequence is RVPRKRGHISP. Residues Asn-62, Asn-127, Asn-137, and Asn-143 are each glycosylated (N-linked (GlcNAc...) asparagine). The III stretch occupies residues 76–157; the sequence is WGILGQPPNR…LVPPSKAVEF (82 aa). Residues 158 to 166 form an IV (linker domain) region; the sequence is HQEQQIFIE. Residues 167–252 form a v (Cys-rich) region; sequence AKASKIFNCR…HSDTPYYPSG (86 aa).

This sequence belongs to the neurexophilin family. May be proteolytically processed at the boundary between the N-terminal non-conserved and the central conserved domain in neuron-like cells. As to expression, highest level in brain.

The protein resides in the secreted. Functionally, may be signaling molecules that resemble neuropeptides. Ligand for alpha-neurexins. The protein is Neurexophilin-3 (NXPH3) of Homo sapiens (Human).